Here is a 349-residue protein sequence, read N- to C-terminus: Lipoyl synthase (349 aa).

[4Fe-4S] cluster contacts are provided by C55, C60, C66, C81, C85, C88, and S292. In terms of domain architecture, Radical SAM core spans 67–281 (WEDREATFLI…SDAAYELGIK (215 aa)). Residues 321 to 349 (LDSTTSQEASTLLERYGASEDTPVTASRR) form a disordered region.

It belongs to the radical SAM superfamily. Lipoyl synthase family. Requires [4Fe-4S] cluster as cofactor.

It localises to the cytoplasm. The catalysed reaction is [[Fe-S] cluster scaffold protein carrying a second [4Fe-4S](2+) cluster] + N(6)-octanoyl-L-lysyl-[protein] + 2 oxidized [2Fe-2S]-[ferredoxin] + 2 S-adenosyl-L-methionine + 4 H(+) = [[Fe-S] cluster scaffold protein] + N(6)-[(R)-dihydrolipoyl]-L-lysyl-[protein] + 4 Fe(3+) + 2 hydrogen sulfide + 2 5'-deoxyadenosine + 2 L-methionine + 2 reduced [2Fe-2S]-[ferredoxin]. Its pathway is protein modification; protein lipoylation via endogenous pathway; protein N(6)-(lipoyl)lysine from octanoyl-[acyl-carrier-protein]: step 2/2. Functionally, catalyzes the radical-mediated insertion of two sulfur atoms into the C-6 and C-8 positions of the octanoyl moiety bound to the lipoyl domains of lipoate-dependent enzymes, thereby converting the octanoylated domains into lipoylated derivatives. The protein is Lipoyl synthase of Corynebacterium jeikeium (strain K411).